The primary structure comprises 309 residues: Olfactory receptor-like protein OLF4 (309 aa).

Topologically, residues 1-25 (MELENDTRIPEFLLLGFSEEPKLQP) are extracellular. Asn5 carries an N-linked (GlcNAc...) asparagine glycan. The chain crosses the membrane as a helical span at residues 26–49 (FLFGLFLSMYLVTILGNLLLILAV). Over 50 to 57 (SSDSHLHT) the chain is Cytoplasmic. The helical transmembrane segment at 58 to 79 (PMYFFLANLSFVDICFTCTTIP) threads the bilayer. The Extracellular segment spans residues 80 to 100 (KMLVNIQTQRKVITYESCIIQ). The chain crosses the membrane as a helical span at residues 101 to 120 (MYFFELFAGIDNFLLTVMAY). The Cytoplasmic portion of the chain corresponds to 121–139 (DRYMAICYPLHYMVIMNPQ). Residues 140-158 (LCSLLLLVSWIMSALHSLL) traverse the membrane as a helical segment. Topologically, residues 159-196 (QTLMVLRLSFCTHFQIPHFFCELNQMIQLACSDTFLNN) are extracellular. A helical membrane pass occupies residues 197-219 (MMLYFAAILLGVAPLVGVLYSYF). Residues 220–236 (KIVSSIRGISSAHSKYK) lie on the Cytoplasmic side of the membrane. The helical transmembrane segment at 237-260 (AFSTCASHLSVVSLFYCTSLGVYL) threads the bilayer. Topologically, residues 261–272 (SSAAPQSTHTSS) are extracellular. A helical transmembrane segment spans residues 273 to 292 (VASVMYTVVTPMLNPFIYSL). The Cytoplasmic segment spans residues 293–309 (RNKDIKGALNVFFRGKP).

It belongs to the G-protein coupled receptor 1 family.

It localises to the cell membrane. Its function is as follows. Putative odorant or sperm cell receptor. The sequence is that of Olfactory receptor-like protein OLF4 from Canis lupus familiaris (Dog).